The primary structure comprises 292 residues: Acetyl-coenzyme A carboxylase carboxyl transferase subunit beta (292 aa).

Residues 29 to 292 (LWVKCSECGQ…HGVKELVQTN (264 aa)) form the CoA carboxyltransferase N-terminal domain. Zn(2+)-binding residues include cysteine 33, cysteine 36, cysteine 52, and cysteine 55. Residues 33-55 (CSECGQVAYRKDLISNFNVCSNC) form a C4-type zinc finger.

The protein belongs to the AccD/PCCB family. As to quaternary structure, acetyl-CoA carboxylase is a heterohexamer composed of biotin carboxyl carrier protein (AccB), biotin carboxylase (AccC) and two subunits each of ACCase subunit alpha (AccA) and ACCase subunit beta (AccD). The cofactor is Zn(2+).

Its subcellular location is the cytoplasm. It catalyses the reaction N(6)-carboxybiotinyl-L-lysyl-[protein] + acetyl-CoA = N(6)-biotinyl-L-lysyl-[protein] + malonyl-CoA. Its pathway is lipid metabolism; malonyl-CoA biosynthesis; malonyl-CoA from acetyl-CoA: step 1/1. In terms of biological role, component of the acetyl coenzyme A carboxylase (ACC) complex. Biotin carboxylase (BC) catalyzes the carboxylation of biotin on its carrier protein (BCCP) and then the CO(2) group is transferred by the transcarboxylase to acetyl-CoA to form malonyl-CoA. In Prochlorococcus marinus subsp. pastoris (strain CCMP1986 / NIES-2087 / MED4), this protein is Acetyl-coenzyme A carboxylase carboxyl transferase subunit beta.